The sequence spans 185 residues: MQTGLSLACLVLLCSVLGEAALRKPKRQAGATDTNGAAKSEPAPVKTKGLKTLDRGWGEDIEWAQTYEEGLAKARENNKPLMVIHHLEDCPYSIALKKAFVADKMAQKLAQEDFIMLNLVHPVADENQSPDGHYVPRVIFIDPSLTVRSDLKGRYGNKLYAYDADDIPELITNMKKAKSFLKTEL.

An N-terminal signal peptide occupies residues 1 to 18 (MQTGLSLACLVLLCSVLG). A disordered region spans residues 25 to 45 (PKRQAGATDTNGAAKSEPAPV).

Belongs to the AGR family. Expressed in the anterior of the dorsal ectoderm from late gastrula stages onwards. Becomes restricted to the cement gland anlage at the onset of neurulation (stages 13 to 14) and expressed exclusively in the cement gland from stage 18 onwards, with transient expression in the hatching gland during tailbud stages.

Its subcellular location is the secreted. Involved in cement gland formation; probably specifies dorsal ectoderm to acquire an anterior fate such as cement gland and forebrain. Signals via the FGF pathway. In Xenopus laevis (African clawed frog), this protein is Anterior gradient protein 2 (ag2).